The sequence spans 160 residues: uncharacterized protein (160 aa).

The protein to A.fulgidus AF1717.

This is an uncharacterized protein from Bacillus subtilis (strain 168).